A 122-amino-acid polypeptide reads, in one-letter code: Large ribosomal subunit protein uL14 (122 aa).

It belongs to the universal ribosomal protein uL14 family. As to quaternary structure, part of the 50S ribosomal subunit. Forms a cluster with proteins L3 and L19. In the 70S ribosome, L14 and L19 interact and together make contacts with the 16S rRNA in bridges B5 and B8.

Binds to 23S rRNA. Forms part of two intersubunit bridges in the 70S ribosome. This is Large ribosomal subunit protein uL14 from Ligilactobacillus salivarius (strain UCC118) (Lactobacillus salivarius).